The primary structure comprises 303 residues: N-acetyl-D-glucosamine kinase (303 aa).

ATP contacts are provided by residues 4–11 and 133–140; these read GFDIGGTK and GVGGGLVL. Zn(2+) is bound by residues His157, Cys177, Cys179, and Cys184.

It belongs to the ROK (NagC/XylR) family. NagK subfamily.

It catalyses the reaction N-acetyl-D-glucosamine + ATP = N-acetyl-D-glucosamine 6-phosphate + ADP + H(+). The protein operates within cell wall biogenesis; peptidoglycan recycling. Its function is as follows. Catalyzes the phosphorylation of N-acetyl-D-glucosamine (GlcNAc) derived from cell-wall degradation, yielding GlcNAc-6-P. This Salmonella gallinarum (strain 287/91 / NCTC 13346) protein is N-acetyl-D-glucosamine kinase.